The following is a 523-amino-acid chain: ATP synthase subunit alpha (523 aa).

173–180 (GDRQTGKT) contributes to the ATP binding site.

Belongs to the ATPase alpha/beta chains family. As to quaternary structure, F-type ATPases have 2 components, CF(1) - the catalytic core - and CF(0) - the membrane proton channel. CF(1) has five subunits: alpha(3), beta(3), gamma(1), delta(1), epsilon(1). CF(0) has three main subunits: a(1), b(2) and c(9-12). The alpha and beta chains form an alternating ring which encloses part of the gamma chain. CF(1) is attached to CF(0) by a central stalk formed by the gamma and epsilon chains, while a peripheral stalk is formed by the delta and b chains.

The protein resides in the cell membrane. The enzyme catalyses ATP + H2O + 4 H(+)(in) = ADP + phosphate + 5 H(+)(out). Functionally, produces ATP from ADP in the presence of a proton gradient across the membrane. The alpha chain is a regulatory subunit. The protein is ATP synthase subunit alpha of Streptomyces griseus subsp. griseus (strain JCM 4626 / CBS 651.72 / NBRC 13350 / KCC S-0626 / ISP 5235).